Consider the following 214-residue polypeptide: Cytochrome b (214 aa).

Transmembrane regions (helical) follow at residues 31 to 51 (FGSMLLTCLMIQIATGFFLAI), 75 to 96 (WIMQNTHAIGASLFFICIYIHI), 111 to 131 (WLSGTTLLIILMATAFFGYVL), and 176 to 196 (FFALHFILPFAIISMSSIHIL). Heme b-binding residues include His81 and His95. Heme b contacts are provided by His180 and His194. An a ubiquinone-binding site is contributed by His199.

Belongs to the cytochrome b family. In terms of assembly, the cytochrome bc1 complex contains 3 respiratory subunits (MT-CYB, CYC1 and UQCRFS1), 2 core proteins (UQCRC1 and UQCRC2) and probably 6 low-molecular weight proteins. The cofactor is heme b.

The protein resides in the mitochondrion inner membrane. Functionally, component of the ubiquinol-cytochrome c reductase complex (complex III or cytochrome b-c1 complex) that is part of the mitochondrial respiratory chain. The b-c1 complex mediates electron transfer from ubiquinol to cytochrome c. Contributes to the generation of a proton gradient across the mitochondrial membrane that is then used for ATP synthesis. The sequence is that of Cytochrome b (MT-CYB) from Agkistrodon contortrix contortrix (Southern copperhead).